Here is a 715-residue protein sequence, read N- to C-terminus: Serrate RNA effector molecule homolog (715 aa).

Disordered stretches follow at residues 1–87 (MDSD…YSGP), 223–259 (ENKDAAEKVEDQVKDEVKEEPNEEQEEGAIDDETDKA), and 629–715 (EPKH…DDIP). 3 stretches are compositionally biased toward basic and acidic residues: residues 7-25 (GDRRRDKFARERRDDDSYR), 37-57 (YDNKRPAGRREDYQVKRSRGD), and 223-242 (ENKDAAEKVEDQVKDEVKEE). Residues 243 to 256 (PNEEQEEGAIDDET) show a composition bias toward acidic residues. The span at 629 to 659 (EPKHMPHMSRDDHRGGGGDRGYGRERDDDRG) shows a compositional bias: basic and acidic residues.

This sequence belongs to the ARS2 family.

The protein localises to the nucleus. Acts as a mediator between the cap-binding complex (CBC) and the primary microRNAs (miRNAs) processing machinery. Contributes to the stability and delivery of capped primary miRNA transcripts to the primary miRNA processing complex, thereby playing a role in RNA-mediated gene silencing (RNAi) by miRNAs. This Caenorhabditis briggsae protein is Serrate RNA effector molecule homolog.